The primary structure comprises 175 residues: Alpha-crystallin B chain (175 aa).

Methionine 1 carries the post-translational modification N-acetylmethionine. Serine 19, serine 45, and serine 59 each carry phosphoserine. Residues 56–164 (RAPSWIDTGL…PERTIPITRE (109 aa)) form the sHSP domain. Residue histidine 83 participates in Zn(2+) binding. At lysine 92 the chain carries N6-acetyllysine. The Zn(2+) site is built by histidine 104, glutamate 106, histidine 111, and histidine 119. Residues 142–175 (VLTVNGPRKQASGPERTIPITREEKPAVTAAPKK) are disordered. Lysine 166 carries the post-translational modification N6-acetyllysine. Threonine 170 carries O-linked (GlcNAc) threonine glycosylation.

Belongs to the small heat shock protein (HSP20) family. In terms of assembly, heteromer composed of three CRYAA and one CRYAB subunits. Aggregates with homologous proteins, including the small heat shock protein HSPB1, to form large heteromeric complexes. Inter-subunit bridging via zinc ions enhances stability, which is crucial as there is no protein turn over in the lens. Interacts with HSPBAP1. Interacts with TTN/titin. Interacts with TMEM109; in the cellular response to DNA damage. Interacts with DES; binds rapidly during early stages of DES filament assembly and a reduced binding seen in the later stages. Interacts with TMED10; the interaction mediates the translocation from the cytoplasm into the ERGIC (endoplasmic reticulum-Golgi intermediate compartment) and thereby secretion. Interacts with ATP6V1A and with MTOR, forming a ternary complex. Lens as well as other tissues.

The protein localises to the cytoplasm. It is found in the nucleus. It localises to the secreted. The protein resides in the lysosome. Its function is as follows. May contribute to the transparency and refractive index of the lens. Has chaperone-like activity, preventing aggregation of various proteins under a wide range of stress conditions. In lens epithelial cells, stabilizes the ATP6V1A protein, preventing its degradation by the proteasome. In Rattus norvegicus (Rat), this protein is Alpha-crystallin B chain.